A 663-amino-acid polypeptide reads, in one-letter code: DNA ligase (663 aa).

Residues 31–35 (DFEFD), 80–81 (SL), and glutamate 110 contribute to the NAD(+) site. Lysine 112 acts as the N6-AMP-lysine intermediate in catalysis. Positions 133, 170, 285, and 309 each coordinate NAD(+). Residues cysteine 404, cysteine 407, cysteine 422, and cysteine 428 each coordinate Zn(2+). Residues 585 to 663 (FIDNKLAGKT…SEDEFLKMIE (79 aa)) form the BRCT domain.

Belongs to the NAD-dependent DNA ligase family. LigA subfamily. Mg(2+) is required as a cofactor. It depends on Mn(2+) as a cofactor.

The catalysed reaction is NAD(+) + (deoxyribonucleotide)n-3'-hydroxyl + 5'-phospho-(deoxyribonucleotide)m = (deoxyribonucleotide)n+m + AMP + beta-nicotinamide D-nucleotide.. DNA ligase that catalyzes the formation of phosphodiester linkages between 5'-phosphoryl and 3'-hydroxyl groups in double-stranded DNA using NAD as a coenzyme and as the energy source for the reaction. It is essential for DNA replication and repair of damaged DNA. The polypeptide is DNA ligase (Azobacteroides pseudotrichonymphae genomovar. CFP2).